The following is a 371-amino-acid chain: tRNA-specific 2-thiouridylase MnmA (371 aa).

Residues 13 to 20 (GMSGGVDS) and Met39 contribute to the ATP site. The interval 99 to 101 (NPD) is interaction with target base in tRNA. The active-site Nucleophile is Cys104. Cys104 and Cys200 form a disulfide bridge. Gly128 provides a ligand contact to ATP. Residues 150–152 (KDQ) are interaction with tRNA. Residue Cys200 is the Cysteine persulfide intermediate of the active site. The interval 309–310 (RY) is interaction with tRNA.

Belongs to the MnmA/TRMU family.

It localises to the cytoplasm. The enzyme catalyses S-sulfanyl-L-cysteinyl-[protein] + uridine(34) in tRNA + AH2 + ATP = 2-thiouridine(34) in tRNA + L-cysteinyl-[protein] + A + AMP + diphosphate + H(+). Functionally, catalyzes the 2-thiolation of uridine at the wobble position (U34) of tRNA, leading to the formation of s(2)U34. The chain is tRNA-specific 2-thiouridylase MnmA from Bacillus velezensis (strain DSM 23117 / BGSC 10A6 / LMG 26770 / FZB42) (Bacillus amyloliquefaciens subsp. plantarum).